A 392-amino-acid chain; its full sequence is Tryptophan synthase beta chain (392 aa).

Residue K84 is modified to N6-(pyridoxal phosphate)lysine.

Belongs to the TrpB family. In terms of assembly, tetramer of two alpha and two beta chains. Pyridoxal 5'-phosphate serves as cofactor.

The enzyme catalyses (1S,2R)-1-C-(indol-3-yl)glycerol 3-phosphate + L-serine = D-glyceraldehyde 3-phosphate + L-tryptophan + H2O. It functions in the pathway amino-acid biosynthesis; L-tryptophan biosynthesis; L-tryptophan from chorismate: step 5/5. In terms of biological role, the beta subunit is responsible for the synthesis of L-tryptophan from indole and L-serine. This Campylobacter jejuni subsp. jejuni serotype O:6 (strain 81116 / NCTC 11828) protein is Tryptophan synthase beta chain.